The primary structure comprises 119 residues: Ribosome-binding factor A (119 aa).

This sequence belongs to the RbfA family. Monomer. Binds 30S ribosomal subunits, but not 50S ribosomal subunits or 70S ribosomes.

The protein resides in the cytoplasm. One of several proteins that assist in the late maturation steps of the functional core of the 30S ribosomal subunit. Associates with free 30S ribosomal subunits (but not with 30S subunits that are part of 70S ribosomes or polysomes). Required for efficient processing of 16S rRNA. May interact with the 5'-terminal helix region of 16S rRNA. The sequence is that of Ribosome-binding factor A from Buchnera aphidicola subsp. Baizongia pistaciae (strain Bp).